The sequence spans 248 residues: Coproheme decarboxylase (248 aa).

Residues R130, 144–148 (YPMDK), H171, Q184, and S222 each bind Fe-coproporphyrin III. The active site involves Y144.

This sequence belongs to the ChdC family. Type 1 subfamily. The cofactor is Fe-coproporphyrin III.

It carries out the reaction Fe-coproporphyrin III + 2 H2O2 + 2 H(+) = heme b + 2 CO2 + 4 H2O. The catalysed reaction is Fe-coproporphyrin III + H2O2 + H(+) = harderoheme III + CO2 + 2 H2O. It catalyses the reaction harderoheme III + H2O2 + H(+) = heme b + CO2 + 2 H2O. It participates in porphyrin-containing compound metabolism; protoheme biosynthesis. In terms of biological role, involved in coproporphyrin-dependent heme b biosynthesis. Catalyzes the decarboxylation of Fe-coproporphyrin III (coproheme) to heme b (protoheme IX), the last step of the pathway. The reaction occurs in a stepwise manner with a three-propionate intermediate. This is Coproheme decarboxylase from Geobacillus thermodenitrificans (strain NG80-2).